Consider the following 132-residue polypeptide: Salivary cystatin-L2 (132 aa).

The signal sequence occupies residues 1-18 (MTSSLALVLVFGGAAVCA). Positions 28–117 (ERSNQDDPEY…RTCTTVIYRN (90 aa)) constitute a Cystatin domain. Residues 87-131 (TCELTSTYNKDTCQANANAAQRTCTTVIYRNLQGEKSISSFECAA) form a required for interaction with mouse ANXA2 region. Disulfide bonds link cysteine 88–cysteine 99 and cysteine 110–cysteine 129.

Belongs to the cystatin family. As to quaternary structure, monomer. Interacts (via loop 2) with mouse ANXA2; the interaction results in reduced activation of mouse NLRC4 inflammasome formation upon Anaplasma phagocytophilum infection. Detected in salivary gland and midgut.

Its subcellular location is the secreted. In terms of biological role, contributes to the suppression of the host's immune response to tick salivary proteins and is important for successful feeding on hosts. Inhibitor of cysteine proteinases. Inhibits host immune responses, probably via its inhibition of host cathepsins. Inhibits host papain (in vitro). Inhibits host cathepsin L (CTSL) (in vitro). Inhibits host cathepsin L2 (CTSV) (in vitro). Attenuates IFN-beta (IFNB1)-triggered JAK/STAT signaling pathway in mouse dendritic cells. Suppresses induction of interferon-stimulated gene IRF7 and production of CXCL10 in lipopolysaccharide (LPS)-activated dendritic cells. Functionally, (Microbial infection) Down-regulates TLR2-mediated host responses to infection by Borrelia burgdorferi and the production of chemokines CCL3 and CXCL10 by host dendritic cells. Enhances infection by the tick-transmitted pathogen B.burgdorferi (in vitro). Its function is as follows. (Microbial infection) Inhibits host inflammatory responses to Anaplasma phagocytophilum infection. Interacts with mouse ANXA2 and suppresses oligomerization of NLRC4, a key component of host inflammasomes that sense A.phagocytophilum infection. Indirectly targets caspase-1 (CASP1) activation and subsequent IL-1beta (IL1B) and IL18 release by inhibiting reactive oxygen species (ROS) production from NADPH oxidase complex in A.phagocytophilum-infected mouse macrophages. (Microbial infection) Promotes replication of tick-borne encephalitis virus in mouse dendritic cells and reduces anti-viral effect of host IFN-beta (IFNB1). This is Salivary cystatin-L2 from Ixodes scapularis (Black-legged tick).